The chain runs to 381 residues: Probable serine/threonine-protein kinase PBL22 (381 aa).

A lipid anchor (S-palmitoyl cysteine) is attached at C3. At T64 the chain carries Phosphothreonine. The 277-residue stretch at 75 to 351 folds into the Protein kinase domain; it reads FREGNIIGKG…GDVVVAFEYI (277 aa). Residues 81–89 and K103 contribute to the ATP site; that span reads IGKGGFGSV. Y148 is subject to Phosphotyrosine. D201 (proton acceptor) is an active-site residue. Residue S235 is modified to Phosphoserine. Phosphothreonine is present on residues T236 and T241. Y249 carries the post-translational modification Phosphotyrosine. The interval 361–381 is disordered; that stretch reads RRTARKSTDSNRLRRETKQSY.

Belongs to the protein kinase superfamily. Ser/Thr protein kinase family. In terms of processing, palmitoylation at Cys-3 and Cys-6 are required for plasma membrane location.

It is found in the cell membrane. The enzyme catalyses L-seryl-[protein] + ATP = O-phospho-L-seryl-[protein] + ADP + H(+). It catalyses the reaction L-threonyl-[protein] + ATP = O-phospho-L-threonyl-[protein] + ADP + H(+). In terms of biological role, may be involved in plant defense signaling. The chain is Probable serine/threonine-protein kinase PBL22 from Arabidopsis thaliana (Mouse-ear cress).